Here is a 323-residue protein sequence, read N- to C-terminus: Sphingolipid delta(4)-desaturase/C4-monooxygenase DES2 (323 aa).

The N-myristoyl glycine moiety is linked to residue Gly2. The next 2 helical transmembrane spans lie at 41–61 and 68–88; these read PHIK…CWLV and WLLF…TLAI. The Histidine box-1 motif lies at 89–93; the sequence is HDISH. A required for C4-hydroxylase activity region spans residues 95 to 99; the sequence is TAFGT. Positions 128–132 match the Histidine box-2 motif; it reads HVDHH. Residues 210–231 traverse the membrane as a helical segment; that stretch reads VYLLGSSLLGLGLHPISGHFVA. The Histidine box-3 signature appears at 259–263; sequence HMEHH.

It belongs to the fatty acid desaturase type 1 family. DEGS subfamily. As to expression, highly expressed in intestinal crypt cells and adjacent epithelial cells (at protein level).

It is found in the endoplasmic reticulum membrane. The enzyme catalyses a dihydroceramide + 2 Fe(II)-[cytochrome b5] + O2 + 2 H(+) = a phytoceramide + 2 Fe(III)-[cytochrome b5] + H2O. It catalyses the reaction an N-acylsphinganine + 2 Fe(II)-[cytochrome b5] + O2 + 2 H(+) = an N-acylsphing-4-enine + 2 Fe(III)-[cytochrome b5] + 2 H2O. It carries out the reaction an N-acylsphinganine + 2 Fe(II)-[cytochrome b5] + O2 + 2 H(+) = an N-acyl-(4R)-4-hydroxysphinganine + 2 Fe(III)-[cytochrome b5] + H2O. The catalysed reaction is N-octanoylsphinganine + 2 Fe(II)-[cytochrome b5] + O2 + 2 H(+) = N-octanoyl-4-hydroxysphinganine + 2 Fe(III)-[cytochrome b5] + H2O. The protein operates within membrane lipid metabolism; sphingolipid biosynthesis. Bifunctional enzyme which acts both as a sphingolipid delta(4)-desaturase and a sphingolipid C4-monooxygenase. The protein is Sphingolipid delta(4)-desaturase/C4-monooxygenase DES2 of Mus musculus (Mouse).